Consider the following 396-residue polypeptide: Stearoyl-[acyl-carrier-protein] 9-desaturase, chloroplastic (396 aa).

A chloroplast-targeting transit peptide spans 1–32; that stretch reads MALKLNPVTTFPSTRSLNNFSSRSPRTFLMAA. Glu-138, Glu-176, His-179, Glu-229, Glu-262, and His-265 together coordinate Fe cation.

It belongs to the fatty acid desaturase type 2 family. As to quaternary structure, homodimer. The cofactor is Fe(2+).

It is found in the plastid. The protein localises to the chloroplast. The enzyme catalyses octadecanoyl-[ACP] + 2 reduced [2Fe-2S]-[ferredoxin] + O2 + 2 H(+) = (9Z)-octadecenoyl-[ACP] + 2 oxidized [2Fe-2S]-[ferredoxin] + 2 H2O. It participates in lipid metabolism; fatty acid metabolism. Its function is as follows. Converts stearoyl-ACP to oleoyl-ACP by introduction of a cis double bond between carbons 9 and 10 of the acyl chain. This Linum usitatissimum (Flax) protein is Stearoyl-[acyl-carrier-protein] 9-desaturase, chloroplastic.